A 327-amino-acid polypeptide reads, in one-letter code: Ribosomal RNA small subunit methyltransferase H (327 aa).

Residues 41–43 (GGH), Asp-60, Tyr-87, Asp-108, and Gln-115 contribute to the S-adenosyl-L-methionine site. The segment at 292 to 327 (AERADEQETLENPRAASARLRAVERLRETTTPGSAR) is disordered.

This sequence belongs to the methyltransferase superfamily. RsmH family.

It is found in the cytoplasm. The enzyme catalyses cytidine(1402) in 16S rRNA + S-adenosyl-L-methionine = N(4)-methylcytidine(1402) in 16S rRNA + S-adenosyl-L-homocysteine + H(+). Specifically methylates the N4 position of cytidine in position 1402 (C1402) of 16S rRNA. The sequence is that of Ribosomal RNA small subunit methyltransferase H from Kocuria rhizophila (strain ATCC 9341 / DSM 348 / NBRC 103217 / DC2201).